The following is a 125-amino-acid chain: Dirigent protein 22 (125 aa).

Residues N8, N30, and N65 are each glycosylated (N-linked (GlcNAc...) asparagine).

This sequence belongs to the plant dirigent protein family. In terms of assembly, homodimer.

It localises to the secreted. It is found in the extracellular space. Its subcellular location is the apoplast. In terms of biological role, dirigent proteins impart stereoselectivity on the phenoxy radical-coupling reaction, yielding optically active lignans from two molecules of coniferyl alcohol in the biosynthesis of lignans, flavonolignans, and alkaloids and thus plays a central role in plant secondary metabolism. The polypeptide is Dirigent protein 22 (DIR22) (Arabidopsis thaliana (Mouse-ear cress)).